The following is a 614-amino-acid chain: Phragmoplastin DRP1C (614 aa).

Residues 32–301 (WEALPTVAVV…LETVIRQKIP (270 aa)) enclose the Dynamin-type G domain. The interval 42-49 (GGQSSGKS) is G1 motif. A GTP-binding site is contributed by 45 to 50 (SSGKSS). Residues 68–70 (VTR) form a G2 motif region. The tract at residues 143–146 (DLPG) is G3 motif. Positions 212–215 (TKLD) are G4 motif. GTP is bound by residues 213–218 (KLDIMD) and 243–246 (NRSQ). The G5 motif stretch occupies residues 242–245 (VNRS). The interval 499–519 (EPEKEKPNPRNAPAPNADPYS) is disordered. Residues 507–517 (PRNAPAPNADP) show a composition bias toward low complexity. Residues 523-614 (FRKIGSNVSA…RDDIDAVAWK (92 aa)) form the GED domain.

This sequence belongs to the TRAFAC class dynamin-like GTPase superfamily. Dynamin/Fzo/YdjA family. In terms of assembly, forms homodimer and may homooligomerize and heterooligomerize to form the phragmoplastin complex. Binds to PHIP1. As to expression, ubiquitous.

The protein localises to the cytoplasm. The protein resides in the cytoskeleton. It is found in the cell cortex. It localises to the cytoplasmic vesicle. Its subcellular location is the clathrin-coated vesicle. The protein localises to the phragmoplast. The enzyme catalyses GTP + H2O = GDP + phosphate + H(+). In terms of biological role, microtubule-associated force-producing protein that is targeted to the growing edges of the cell plate during cytokinesis. Also plays a major role in plasma membrane maintenance during pollen maturation. Has a GTPase activity. This chain is Phragmoplastin DRP1C, found in Arabidopsis thaliana (Mouse-ear cress).